Reading from the N-terminus, the 223-residue chain is Deoxyribose-phosphate aldolase (223 aa).

The active-site Proton donor/acceptor is aspartate 89. Lysine 152 serves as the catalytic Schiff-base intermediate with acetaldehyde. Lysine 181 functions as the Proton donor/acceptor in the catalytic mechanism.

Belongs to the DeoC/FbaB aldolase family. DeoC type 1 subfamily.

It localises to the cytoplasm. It catalyses the reaction 2-deoxy-D-ribose 5-phosphate = D-glyceraldehyde 3-phosphate + acetaldehyde. The protein operates within carbohydrate degradation; 2-deoxy-D-ribose 1-phosphate degradation; D-glyceraldehyde 3-phosphate and acetaldehyde from 2-deoxy-alpha-D-ribose 1-phosphate: step 2/2. Functionally, catalyzes a reversible aldol reaction between acetaldehyde and D-glyceraldehyde 3-phosphate to generate 2-deoxy-D-ribose 5-phosphate. This Bacillus cereus (strain B4264) protein is Deoxyribose-phosphate aldolase.